The sequence spans 332 residues: Melanocortin receptor 4 (332 aa).

At 1–43 (MNSTHHHGMYTSLHLWNRSSHGLHGNASESLGKGHSDGGCYEQ) the chain is on the extracellular side. Asn-2, Asn-17, and Asn-26 each carry an N-linked (GlcNAc...) asparagine glycan. 2 cysteine pairs are disulfide-bonded: Cys-40/Cys-279 and Cys-271/Cys-277. Residues 44 to 69 (LFVSPEVFVTLGVISLLENILVIVAI) traverse the membrane as a helical segment. Residues 70–81 (AKNKNLHSPMYF) are Cytoplasmic-facing. The helical transmembrane segment at 82–106 (FICSLAVADMLVSVSNGSETIVITL) threads the bilayer. Residues Glu-100, Asp-122, and Asp-126 each coordinate Ca(2+). Residues 107–123 (LNSTDTDAQSFTVNIDN) are Extracellular-facing. Residues 124–145 (VIDSVICSSLLASICSLLSIAV) traverse the membrane as a helical segment. The Cytoplasmic segment spans residues 146 to 165 (DRYFTIFYALQYHNIMTVRR). Residues 166–186 (VGIIISCIWAACTVSGVLFII) traverse the membrane as a helical segment. The Extracellular portion of the chain corresponds to 187-191 (YSDSS). Residues 192–215 (AVIICLITMFFTMLVLMASLYVHM) traverse the membrane as a helical segment. Over 216–248 (FLMARLHIKRIAVLPGTGTIRQGANMKGAITLT) the chain is Cytoplasmic. Residues 249-271 (ILIGVFVVCWAPFFLHLLFYISC) form a helical membrane-spanning segment. Topologically, residues 272-280 (PQNPYCVCF) are extracellular. A helical transmembrane segment spans residues 281–304 (MSHFNLYLILIMCNAVIDPLIYAL). At 305-332 (RSQELRKTFKEIICFYPLGGICELPGRY) the chain is on the cytoplasmic side. A lipid anchor (S-palmitoyl cysteine) is attached at Cys-318.

The protein belongs to the G-protein coupled receptor 1 family. In terms of assembly, homodimer; disulfide-linked, also forms higher order oligomers. Interacts with GNAS. Interacts with ATRNL1. Interacts with MGRN1; this interaction competes with GNAS-binding and thus inhibits agonist-induced cAMP production. Interacts with MRAP and MRAP2; these associated factors increase ligand-sensitivity and generation of cAMP. In terms of tissue distribution, brain, enriched in the striatum, nucleus accumbens, and periaqueductal gray.

The protein resides in the cell membrane. Its function is as follows. Hormone receptor that acts as a key component of the leptin-melanocortin pathway at the intersection of homeostatic maintenance of energetic state. Plays a role in regulating food intake: activation by a stimulating hormone such as anorexigenic alpha-melanocyte stimulating hormone (alpha-MSH) inhibits appetite, whereas binding to a natural antagonist like Agouti-related protein/AGRP promotes appetite. G-protein-coupled receptor that activates conventional Galphas signaling leading to induction of anorexogenic signaling in the hypothalamus to result in negative energy balance. Regulates the firing activity of neurons from the hypothalamus by alpha-MSH and AGRP independently of Galphas signaling by ligand-induced coupling of closure of inwardly rectifying potassium channel KCNJ13. In intestinal epithelial cells, plays a role in the inhibition of hepatic glucose production via nesfatin-1/NUCB2 leading to increased cyclic adenosine monophosphate (cAMP) levels and glucagon-like peptide 1 (GLP-1) secretion in the intestinal epithelium. The protein is Melanocortin receptor 4 (Mc4r) of Rattus norvegicus (Rat).